Here is a 602-residue protein sequence, read N- to C-terminus: Probable translation initiation factor IF-2 (602 aa).

Residues 15–230 (LRTPIVAVLG…VLMGLSQRYL (216 aa)) enclose the tr-type G domain. The G1 stretch occupies residues 24 to 31 (GHVDHGKT). 24-31 (GHVDHGKT) is a binding site for GTP. Positions 49 to 53 (AITQH) are G2. Residues 86 to 89 (DTPG) are G3. GTP contacts are provided by residues 86-90 (DTPGH) and 140-143 (NKID). The interval 140–143 (NKID) is G4. Residues 208–210 (SAE) form a G5 region.

It belongs to the TRAFAC class translation factor GTPase superfamily. Classic translation factor GTPase family. IF-2 subfamily.

Its function is as follows. Function in general translation initiation by promoting the binding of the formylmethionine-tRNA to ribosomes. Seems to function along with eIF-2. This Natronomonas pharaonis (strain ATCC 35678 / DSM 2160 / CIP 103997 / JCM 8858 / NBRC 14720 / NCIMB 2260 / Gabara) (Halobacterium pharaonis) protein is Probable translation initiation factor IF-2.